A 649-amino-acid chain; its full sequence is Putative calpain-like cysteine protease A (649 aa).

The propeptide occupies 1 to 3 (MLT). Disordered stretches follow at residues 1 to 22 (MLTTESPTTTTTTTTTTTSSPS) and 124 to 193 (PLSN…SMPA). The C2 domain maps to 15–123 (TTTTSSPSSD…LHANGEAKWY (109 aa)). Low complexity predominate over residues 140–149 (ITNSNNKDNN). Basic and acidic residues predominate over residues 159 to 172 (AQEKGDEDQHHSAD). Domain III regions lie at residues 458–489 (EGTYIVIPSTYDHGIEGAFHLTLFTDDKNATF) and 498–633 (EVEQ…ISLD).

It belongs to the peptidase C2 family. In terms of assembly, monomer. In terms of processing, undergoes autolytic cleavage between Pro-192 and Ala-193.

Its subcellular location is the cytoplasm. It localises to the cytosol. In terms of biological role, has a weak caseinolytic activity. This is Putative calpain-like cysteine protease A (cplA) from Dictyostelium discoideum (Social amoeba).